The following is a 295-amino-acid chain: Probable intramembrane protease C25B8.17 (295 aa).

The chain crosses the membrane as a helical span at residues 1 to 21; that stretch reads MEGVILASSALFTVYIGAKWS. Residues 22–35 lie on the Cytoplasmic side of the membrane; the sequence is AQEEEPEEKQLINK. The chain crosses the membrane as a helical span at residues 36–56; that stretch reads RLAVLFPIFGGVTLVLMYLAL. The Lumenal segment spans residues 57 to 63; the sequence is RYLSKEY. Residues 64–84 traverse the membrane as a helical segment; that stretch reads IQLILQGYASLASIICFVRSF. Topologically, residues 85 to 89 are cytoplasmic; sequence NPKTT. Residues 90-106 form a helical membrane-spanning segment; sequence FGKITATMSSIAIALFY. Topologically, residues 107–111 are lumenal; the sequence is FKTKH. The helical transmembrane segment at 112–130 threads the bilayer; the sequence is WMASNILAWALAANSISIM. Over 131–139 the chain is Cytoplasmic; that stretch reads RIDSYNTGA. Residues 140-160 form a helical membrane-spanning segment; sequence LLLGALFFYDIYFVFGTEVMV. The active site involves aspartate 149. At 161–183 the chain is on the lumenal side; that stretch reads TVATGIDIPAKYVLPQFKNPTRL. The helical transmembrane segment at 184 to 204 threads the bilayer; it reads SMLGLGDIVMPGLMLALMYRF. Aspartate 190 is a catalytic residue. Residues 205–221 lie on the Cytoplasmic side of the membrane; it reads DLHYYINSTSQPKKHST. The chain crosses the membrane as a helical span at residues 222–244; the sequence is YFRNTFIAYGLGLGVTNFALYYF. The Lumenal portion of the chain corresponds to 245 to 249; the sequence is KAAQP. Positions 249-251 match the PAL motif; it reads PAL. Residues 250–268 traverse the membrane as a helical segment; the sequence is ALLYLSPACIVAPLLTAWY. The Cytoplasmic segment spans residues 269–295; that stretch reads RDELKTLFSFRSETEDETDEQDKCKST.

This sequence belongs to the peptidase A22B family.

The protein localises to the endoplasmic reticulum membrane. It localises to the golgi apparatus membrane. The sequence is that of Probable intramembrane protease C25B8.17 from Schizosaccharomyces pombe (strain 972 / ATCC 24843) (Fission yeast).